Consider the following 384-residue polypeptide: Methylthioribose-1-phosphate isomerase (384 aa).

Asp-255 (proton donor) is an active-site residue.

The protein belongs to the eIF-2B alpha/beta/delta subunits family. MtnA subfamily.

The protein localises to the cytoplasm. The protein resides in the nucleus. It carries out the reaction 5-(methylsulfanyl)-alpha-D-ribose 1-phosphate = 5-(methylsulfanyl)-D-ribulose 1-phosphate. It functions in the pathway amino-acid biosynthesis; L-methionine biosynthesis via salvage pathway; L-methionine from S-methyl-5-thio-alpha-D-ribose 1-phosphate: step 1/6. Functionally, catalyzes the interconversion of methylthioribose-1-phosphate (MTR-1-P) into methylthioribulose-1-phosphate (MTRu-1-P). The protein is Methylthioribose-1-phosphate isomerase (mri1) of Talaromyces marneffei (strain ATCC 18224 / CBS 334.59 / QM 7333) (Penicillium marneffei).